We begin with the raw amino-acid sequence, 396 residues long: Elongation factor Tu (396 aa).

In terms of domain architecture, tr-type G spans 10-205 (KSHANIGTIG…AVDEYIPTPE (196 aa)). Positions 19–26 (GHVDHGKT) are G1. 19–26 (GHVDHGKT) contributes to the GTP binding site. T26 is a Mg(2+) binding site. The interval 61–65 (GITIS) is G2. A G3 region spans residues 82-85 (DCPG). GTP-binding positions include 82–86 (DCPGH) and 137–140 (NKCD). A G4 region spans residues 137–140 (NKCD). The interval 175–177 (SAL) is G5. Position 385 is a phosphothreonine (T385).

This sequence belongs to the TRAFAC class translation factor GTPase superfamily. Classic translation factor GTPase family. EF-Tu/EF-1A subfamily. As to quaternary structure, monomer. Interacts with BrxC. In terms of processing, phosphorylated on Thr-385 in vitro by PrkC in the presence of poly-L-lysine or myelin basic protein, dephosphorylated by PrpC.

It localises to the cytoplasm. It catalyses the reaction GTP + H2O = GDP + phosphate + H(+). Its function is as follows. GTP hydrolase that promotes the GTP-dependent binding of aminoacyl-tRNA to the A-site of ribosomes during protein biosynthesis. The protein is Elongation factor Tu of Bacillus subtilis (strain 168).